Reading from the N-terminus, the 453-residue chain is MKFLALAALFASTVSSIAVDGLIPGARVIPANDVVALKKVGAHHQKHPHRRTVIIRPSFNDEDDVSADFLWGIKWANRGGRLLLQKGKKYVIGKKLDLTFLKDIEVQLDGELKFTNDVPYWQANNFYYDFQKSISFWRWGGEDIKIFGSGVLNGNGQRWYNEFAGQEILDPNNKYYRPILFVTENATRVSVEGITQLNSPCWTNFFVRTKDISFNNVFIHAYSTNASALPKNTDGFDTLNVDGLTVTNTRVDIGDDCLSPKPNTTNVFVQNLWCNGTHGTSMGSIGQYPGVLDIIENVWIENVTLLNGENGARLKAWAGPNVGYGRINNVTYKNIHVENTDNPIVLDQCYFNINATQCAAYPSRVNFTNIVFENIYGTSSGKHGKVVADLTCSPNAVCSGIRLKNIHLTSPAGSPPVIVCDGIQGDIGVECQSSTNLTTKRSIGLARNLKYKA.

Residues 1 to 16 form the signal peptide; the sequence is MKFLALAALFASTVSS. N-linked (GlcNAc...) asparagine glycans are attached at residues N185 and N225. Catalysis depends on D255, which acts as the Proton donor. C257 and C274 are oxidised to a cystine. N263 and N275 each carry an N-linked (GlcNAc...) asparagine glycan. H278 is a catalytic residue. PbH1 repeat units lie at residues 295 to 316 and 327 to 348; these read IENVWIENVTLLNGENGARLKA and INNVTYKNIHVENTDNPIVLDQ. N-linked (GlcNAc...) asparagine glycosylation is found at N302, N329, N354, and N366. One copy of the PbH1 3 repeat lies at 362 to 405; that stretch reads PSRVNFTNIVFENIYGTSSGKHGKVVADLTCSPNAVCSGIRLKN. C392 and C398 form a disulfide bridge. The N-linked (GlcNAc...) asparagine glycan is linked to N436.

Belongs to the glycosyl hydrolase 28 family.

It is found in the secreted. It catalyses the reaction [(1-&gt;4)-alpha-D-galacturonosyl](n) + H2O = alpha-D-galacturonate + [(1-&gt;4)-alpha-D-galacturonosyl](n-1). Its function is as follows. Specific in hydrolyzing the terminal glycosidic bond of polygalacturonic acid and oligogalacturonates. The sequence is that of Probable exopolygalacturonase B (pgxB) from Neosartorya fischeri (strain ATCC 1020 / DSM 3700 / CBS 544.65 / FGSC A1164 / JCM 1740 / NRRL 181 / WB 181) (Aspergillus fischerianus).